The chain runs to 144 residues: Large ribosomal subunit protein uL13 (144 aa).

Belongs to the universal ribosomal protein uL13 family. In terms of assembly, part of the 50S ribosomal subunit.

Functionally, this protein is one of the early assembly proteins of the 50S ribosomal subunit, although it is not seen to bind rRNA by itself. It is important during the early stages of 50S assembly. In Nitrosospira multiformis (strain ATCC 25196 / NCIMB 11849 / C 71), this protein is Large ribosomal subunit protein uL13.